A 394-amino-acid polypeptide reads, in one-letter code: uncharacterized protein (394 aa).

4 N-linked (GlcNAc...) asparagine glycosylation sites follow: Asn3, Asn14, Asn20, and Asn25. The next 6 membrane-spanning stretches (helical) occupy residues 64–84 (AVGI…LVNI), 101–121 (FIWI…YIDV), 133–153 (IFSF…WHVI), 180–200 (IFVV…MGFF), 228–248 (VLLA…SFVY), and 256–276 (WVGM…QFLE). N-linked (GlcNAc...) asparagine glycans are attached at residues Asn283 and Asn286. A helical membrane pass occupies residues 291–311 (AGLVFGLGFCPPLILAYTVCI). Asn344 is a glycosylation site (N-linked (GlcNAc...) asparagine).

Its subcellular location is the membrane. This is an uncharacterized protein from Schizosaccharomyces pombe (strain 972 / ATCC 24843) (Fission yeast).